Here is a 468-residue protein sequence, read N- to C-terminus: UDP-glucosyl transferase 74CD1 (468 aa).

Gly-20 lines the UDP-alpha-D-glucose pocket. His-21 serves as the catalytic Proton acceptor. The Charge relay role is filled by Asp-114. Residues Ser-292, Trp-344, Gln-347, His-362, Trp-365, Asn-366, Ser-367, Glu-370, Asp-386, and Gln-387 each coordinate UDP-alpha-D-glucose.

This sequence belongs to the UDP-glycosyltransferase family. Mainly expressed in flowers, flower buds and young leaves, and, to a lesser extent, in old leaves, stems and roots.

The protein operates within secondary metabolite biosynthesis; terpenoid biosynthesis. Its function is as follows. Component of the oleanane-type triterpene saponins (e.g. saponarioside A and saponarioside B) biosynthetic pathway, leading to the production of natural products with detergent properties used as traditional sources of soap. A glycosyltransferase that, together with SDR1, mediates the conversion of QA-tri to QA-triF; UGT74CD1 may transfer 4-keto-6-deoxy-glucose to QA-tri, which is in turn reduced to D-fucose by SDR1, thus leading to QA-triF formation via the initiation of the C-28 sugar chain. The sequence is that of UDP-glucosyl transferase 74CD1 from Saponaria officinalis (Common soapwort).